The primary structure comprises 383 residues: Succinyl-diaminopimelate desuccinylase (383 aa).

H74 lines the Zn(2+) pocket. The active site involves D76. D107 is a Zn(2+) binding site. E141 functions as the Proton acceptor in the catalytic mechanism. E142, E170, and H356 together coordinate Zn(2+).

The protein belongs to the peptidase M20A family. DapE subfamily. As to quaternary structure, homodimer. Zn(2+) serves as cofactor. Requires Co(2+) as cofactor.

The catalysed reaction is N-succinyl-(2S,6S)-2,6-diaminopimelate + H2O = (2S,6S)-2,6-diaminopimelate + succinate. Its pathway is amino-acid biosynthesis; L-lysine biosynthesis via DAP pathway; LL-2,6-diaminopimelate from (S)-tetrahydrodipicolinate (succinylase route): step 3/3. In terms of biological role, catalyzes the hydrolysis of N-succinyl-L,L-diaminopimelic acid (SDAP), forming succinate and LL-2,6-diaminopimelate (DAP), an intermediate involved in the bacterial biosynthesis of lysine and meso-diaminopimelic acid, an essential component of bacterial cell walls. This chain is Succinyl-diaminopimelate desuccinylase, found in Cupriavidus taiwanensis (strain DSM 17343 / BCRC 17206 / CCUG 44338 / CIP 107171 / LMG 19424 / R1) (Ralstonia taiwanensis (strain LMG 19424)).